A 122-amino-acid polypeptide reads, in one-letter code: MVQQESRLKVADNTGAKELLVIRVMGGSTRRYANIGDVIVATVKDATPGGVVKKGDVVKAVVVRSVKGARRKDGSYIKFDENAAVIIKDDKTPKGTRIFGPVARELREKQFMKIVSLAPEVL.

Belongs to the universal ribosomal protein uL14 family. As to quaternary structure, part of the 50S ribosomal subunit. Forms a cluster with proteins L3 and L19. In the 70S ribosome, L14 and L19 interact and together make contacts with the 16S rRNA in bridges B5 and B8.

Its function is as follows. Binds to 23S rRNA. Forms part of two intersubunit bridges in the 70S ribosome. The protein is Large ribosomal subunit protein uL14 of Agathobacter rectalis (strain ATCC 33656 / DSM 3377 / JCM 17463 / KCTC 5835 / VPI 0990) (Eubacterium rectale).